Here is a 309-residue protein sequence, read N- to C-terminus: (S)-sulfolactate dehydrogenase (309 aa).

NAD(+) is bound by residues 151–152, D171, 231–233, and D257; these read GI and TAR. Residue R233 is part of the active site. Residue E262 is part of the active site. H281 serves as the catalytic Proton donor. Residue 281–284 participates in NAD(+) binding; that stretch reads HIAG.

The protein belongs to the D-isomer specific 2-hydroxyacid dehydrogenase family.

The enzyme catalyses (2S)-3-sulfolactate + NAD(+) = 3-sulfopyruvate + NADH + H(+). Dehydrogenase of the (R,S)-sulfolactate degradation pathway that only acts on the (S)-enantiomer of 3-sulfolactate. Together with ComC, provides a racemase system that converts (2S)-3-sulfolactate to (2R)-3-sulfolactate, which is degraded further by (2R)-sulfolactate sulfo-lyase. Specific for NAD. Also able to form sulfolactate from sulfopyruvate. This is (S)-sulfolactate dehydrogenase (slcC) from Chromohalobacter salexigens (strain ATCC BAA-138 / DSM 3043 / CIP 106854 / NCIMB 13768 / 1H11).